The sequence spans 447 residues: Na(+)-translocating NADH-quinone reductase subunit A (447 aa).

It belongs to the NqrA family. Composed of six subunits; NqrA, NqrB, NqrC, NqrD, NqrE and NqrF.

It carries out the reaction a ubiquinone + n Na(+)(in) + NADH + H(+) = a ubiquinol + n Na(+)(out) + NAD(+). In terms of biological role, NQR complex catalyzes the reduction of ubiquinone-1 to ubiquinol by two successive reactions, coupled with the transport of Na(+) ions from the cytoplasm to the periplasm. NqrA to NqrE are probably involved in the second step, the conversion of ubisemiquinone to ubiquinol. In Klebsiella pneumoniae (strain 342), this protein is Na(+)-translocating NADH-quinone reductase subunit A.